A 207-amino-acid chain; its full sequence is MPDYALEAAHGGLVVGIDEVGRGPLAGPVVASAVAFTAPPSETLSSLLDDSKKLTARRRMLAYEALMADEQALIGIGAASVAEIERINIAQACYLAMRRALSRLGCTPDLALVDGKHAPKLPCPIKMVIGGDGISLSIAAASIIAKVTRDRLMVRLAVRHDAYGWERNAGYGTAAHMQGLKLRGVTPHHRRGFAPIRNMIEAEAHAA.

The RNase H type-2 domain maps to 12 to 205 (GLVVGIDEVG…IRNMIEAEAH (194 aa)). Residues Asp18, Glu19, and Asp114 each coordinate a divalent metal cation.

Belongs to the RNase HII family. Mn(2+) is required as a cofactor. It depends on Mg(2+) as a cofactor.

It is found in the cytoplasm. The catalysed reaction is Endonucleolytic cleavage to 5'-phosphomonoester.. Endonuclease that specifically degrades the RNA of RNA-DNA hybrids. This is Ribonuclease HII from Gluconobacter oxydans (strain 621H) (Gluconobacter suboxydans).